Consider the following 457-residue polypeptide: UDP-N-acetylmuramate--L-alanine ligase (457 aa).

109–115 (GTDGKTT) is an ATP binding site.

Belongs to the MurCDEF family.

It is found in the cytoplasm. It carries out the reaction UDP-N-acetyl-alpha-D-muramate + L-alanine + ATP = UDP-N-acetyl-alpha-D-muramoyl-L-alanine + ADP + phosphate + H(+). The protein operates within cell wall biogenesis; peptidoglycan biosynthesis. Cell wall formation. The protein is UDP-N-acetylmuramate--L-alanine ligase of Thermotoga petrophila (strain ATCC BAA-488 / DSM 13995 / JCM 10881 / RKU-1).